Consider the following 104-residue polypeptide: DNA-binding transcriptional repressor TubR (104 aa).

2 consecutive DNA-binding regions (HTH) follow at residues 43-50 (KTAVAEMI) and 54-65 (KPTVFATVNSFY).

In terms of assembly, homodimer. Binds to tubC DNA, the TubR-DNA complex binds to TubZ.

A DNA-binding protein that is part of the type III plasmid partition system used to ensure correct segregation of the pBtoxis plasmid. Cooperatively binds to the centromere-like site (tubC), which may seed filament formation by the TubZ polymerizing GTPase, stabilizing TubZ filaments. TubR-tubC complexes track the depolymerizing minus end of the filament, probably pulling plasmid within the cell. Required for plasmid replication. Negatively regulates levels of TubZ; its effect on RNA expression has not been shown. Specifically binds iterons, 12-bp imperfect direct repeats that function as a plasmid origin of replication. Four TubR dimers bind to tubC, forming an extended bent DNA-protein filament with protein wrapping helically around the outside of the DNA. This chain is DNA-binding transcriptional repressor TubR, found in Bacillus thuringiensis subsp. israelensis.